Consider the following 408-residue polypeptide: 26S proteasome regulatory subunit 6B homolog (408 aa).

Alanine 2 is modified (N-acetylalanine). Serine 16 is modified (phosphoserine). Residues 28–75 (EDLYGRLKSLERQLEFTDIQEEYVKDEQKNLKRELLRAQEEVKRIQSV) are a coiled coil. Residue 196 to 203 (GPPGTGKT) participates in ATP binding.

It belongs to the AAA ATPase family. As to quaternary structure, component of the 19S regulatory particle (RP/PA700) base subcomplex of the 26S proteasome. The 26S proteasome is composed of a core protease (CP), known as the 20S proteasome, capped at one or both ends by the 19S regulatory particle (RP/PA700). The RP/PA700 complex is composed of at least 17 different subunits in two subcomplexes, the base and the lid, which form the portions proximal and distal to the 20S proteolytic core, respectively. In terms of tissue distribution, expressed in dark-grown etiolated seedlings, roots, leaves, stems and flowers.

It localises to the cytoplasm. It is found in the nucleus. Functionally, the 26S proteasome is involved in the ATP-dependent degradation of ubiquitinated proteins. The regulatory (or ATPase) complex confers ATP dependency and substrate specificity to the 26S complex. The polypeptide is 26S proteasome regulatory subunit 6B homolog (RPT3) (Arabidopsis thaliana (Mouse-ear cress)).